Here is a 143-residue protein sequence, read N- to C-terminus: Nucleoside diphosphate kinase (143 aa).

K11, F59, R87, T93, R104, and N114 together coordinate ATP. The active-site Pros-phosphohistidine intermediate is the H117.

Belongs to the NDK family. Homotetramer. Requires Mg(2+) as cofactor.

The protein resides in the cytoplasm. The enzyme catalyses a 2'-deoxyribonucleoside 5'-diphosphate + ATP = a 2'-deoxyribonucleoside 5'-triphosphate + ADP. It catalyses the reaction a ribonucleoside 5'-diphosphate + ATP = a ribonucleoside 5'-triphosphate + ADP. Major role in the synthesis of nucleoside triphosphates other than ATP. The ATP gamma phosphate is transferred to the NDP beta phosphate via a ping-pong mechanism, using a phosphorylated active-site intermediate. In Erwinia tasmaniensis (strain DSM 17950 / CFBP 7177 / CIP 109463 / NCPPB 4357 / Et1/99), this protein is Nucleoside diphosphate kinase.